Consider the following 417-residue polypeptide: Phosphoglycerate kinase 1 (417 aa).

(2R)-3-phosphoglycerate-binding residues include Val23, Asp24, Phe25, Asn26, Asn38, Arg39, Ser62, His63, Gly65, Arg66, Leu121, Arg122, His168, and Arg169. Residue Gly212 participates in ADP binding. A CDP-binding site is contributed by Gly212. The AMP site is built by Ala213 and Lys214. Ala213 provides a ligand contact to ATP. A Mg(2+)-binding site is contributed by Ala213. Asp217 is a binding site for CDP. A Mg(2+)-binding site is contributed by Asp217. Lys218 is a binding site for AMP. An ATP-binding site is contributed by Lys218. Gly236 is an ADP binding site. Gly236 provides a ligand contact to CDP. The AMP site is built by Gly237 and Gly311. Gly237 and Gly311 together coordinate ATP. Gly336 and Phe341 together coordinate CDP. Phe341 serves as a coordination point for ADP. Glu342 serves as a coordination point for AMP. Residues Glu342, Asp374, and Thr375 each contribute to the ATP site. Asp374 contacts Mg(2+).

It belongs to the phosphoglycerate kinase family. As to quaternary structure, monomer. It depends on Mg(2+) as a cofactor.

The protein resides in the cytoplasm. It is found in the mitochondrion. The catalysed reaction is (2R)-3-phosphoglycerate + ATP = (2R)-3-phospho-glyceroyl phosphate + ADP. It functions in the pathway carbohydrate degradation; glycolysis; pyruvate from D-glyceraldehyde 3-phosphate: step 2/5. Catalyzes one of the two ATP producing reactions in the glycolytic pathway via the reversible conversion of 1,3-diphosphoglycerate to 3-phosphoglycerate. Both L- and D- forms of purine and pyrimidine nucleotides can be used as substrates, but the activity is much lower on pyrimidines. Negatively regulates the biosynthesis of acetyl-CoA from pyruvate in the mitochondrion. The sequence is that of Phosphoglycerate kinase 1 (PGK1) from Rhizopus niveus.